Reading from the N-terminus, the 152-residue chain is Transcriptional regulator MraZ (152 aa).

SpoVT-AbrB domains are found at residues 5–52 (ASAI…PLKE) and 81–124 (ATEC…SDAE).

The protein belongs to the MraZ family. In terms of assembly, forms oligomers.

It is found in the cytoplasm. The protein resides in the nucleoid. This chain is Transcriptional regulator MraZ, found in Pasteurella multocida (strain Pm70).